A 432-amino-acid polypeptide reads, in one-letter code: Killer cell immunoglobulin-like receptor 3DL1 (432 aa).

The first 21 residues, Met-1–Ala-21, serve as a signal peptide directing secretion. At His-22–Asn-335 the chain is on the extracellular side. 3 Ig-like C2-type domains span residues Gly-42–Tyr-100, Gly-135–Tyr-202, and Gly-238–Ala-301. Residue Asn-44 is glycosylated (N-linked (GlcNAc...) asparagine). A disulfide bridge links Cys-49 with Cys-95. Asn-137 carries N-linked (GlcNAc...) asparagine glycosylation. Disulfide bonds link Cys-142–Cys-195 and Cys-245–Cys-294. Residue Asn-300 is glycosylated (N-linked (GlcNAc...) asparagine). A helical membrane pass occupies residues Leu-336–Ser-356. The Cytoplasmic segment spans residues Cys-357–Lys-432.

Belongs to the immunoglobulin superfamily.

It localises to the cell membrane. In terms of biological role, receptor on natural killer (NK) cells. Inhibits the activity of NK cells thus preventing cell lysis. The chain is Killer cell immunoglobulin-like receptor 3DL1 (Kir3dl1) from Mus musculus (Mouse).